Reading from the N-terminus, the 235-residue chain is Matrix protein (235 aa).

It belongs to the nucleorhabdovirus type-2 matrix protein family. As to quaternary structure, homomultimer. Interacts with nucleoprotein and with the cytoplasmic domain of glycoprotein.

The protein localises to the virion membrane. It localises to the host endomembrane system. Functionally, plays a major role in assembly and budding of virion. Completely covers the ribonucleoprotein coil and keep it in condensed bullet-shaped form. Inhibits viral transcription and stimulates replication. The chain is Matrix protein (M) from Colocasia esculenta (Wild taro).